We begin with the raw amino-acid sequence, 280 residues long: Ribosomal RNA small subunit methyltransferase I (280 aa).

Belongs to the methyltransferase superfamily. RsmI family.

Its subcellular location is the cytoplasm. The catalysed reaction is cytidine(1402) in 16S rRNA + S-adenosyl-L-methionine = 2'-O-methylcytidine(1402) in 16S rRNA + S-adenosyl-L-homocysteine + H(+). Functionally, catalyzes the 2'-O-methylation of the ribose of cytidine 1402 (C1402) in 16S rRNA. The polypeptide is Ribosomal RNA small subunit methyltransferase I (Rickettsia prowazekii (strain Madrid E)).